A 145-amino-acid chain; its full sequence is Bacilliredoxin BLi02578/BL01507 (145 aa).

The protein belongs to the bacilliredoxin family.

In Bacillus licheniformis (strain ATCC 14580 / DSM 13 / JCM 2505 / CCUG 7422 / NBRC 12200 / NCIMB 9375 / NCTC 10341 / NRRL NRS-1264 / Gibson 46), this protein is Bacilliredoxin BLi02578/BL01507.